We begin with the raw amino-acid sequence, 187 residues long: UPF0301 protein Cpar_0662 (187 aa).

The protein belongs to the UPF0301 (AlgH) family.

The polypeptide is UPF0301 protein Cpar_0662 (Chlorobaculum parvum (strain DSM 263 / NCIMB 8327) (Chlorobium vibrioforme subsp. thiosulfatophilum)).